The chain runs to 129 residues: Small ribosomal subunit protein uS11 (129 aa).

It belongs to the universal ribosomal protein uS11 family. As to quaternary structure, part of the 30S ribosomal subunit. Interacts with proteins S7 and S18. Binds to IF-3.

In terms of biological role, located on the platform of the 30S subunit, it bridges several disparate RNA helices of the 16S rRNA. Forms part of the Shine-Dalgarno cleft in the 70S ribosome. This chain is Small ribosomal subunit protein uS11, found in Erwinia tasmaniensis (strain DSM 17950 / CFBP 7177 / CIP 109463 / NCPPB 4357 / Et1/99).